A 5218-amino-acid chain; its full sequence is HC-toxin synthetase (5218 aa).

The tract at residues 223-620 (SARAHEQDAN…VGRSDTQIKL (398 aa)) is adenylation 1. One can recognise a Carrier 1 domain in the interval 769-843 (MNDDSLLLTA…TAASCIKSAQ (75 aa)). S803 is modified (O-(pantetheine 4'-phosphoryl)serine). The tract at residues 858–1154 (IPVSPIQKLF…GWFTTISPVY (297 aa)) is condensation 1. The interval 1338-1806 (EGVYPGSPMQ…LPIVSEHDTA (469 aa)) is epimerization. The interval 1828 to 2233 (SRKVVEHPQR…IGRKDTQVKM (406 aa)) is adenylation 2. One can recognise a Carrier 2 domain in the interval 2379-2453 (ETTDTVEDRL…DMAKLFSHGQ (75 aa)). S2414 bears the O-(pantetheine 4'-phosphoryl)serine mark. Residues 2531 to 2929 (EDVFPCTPMQ…MEQFGHNLQT (399 aa)) form a condensation 2 region. Residues 2979-3386 (LEETAQSQPA…GRKDGQIKLR (408 aa)) are adenylation 3. Positions 3532 to 3608 (QVLTTNESVL…DMAGQISFVQ (77 aa)) constitute a Carrier 3 domain. The residue at position 3569 (S3569) is an O-(pantetheine 4'-phosphoryl)serine. The tract at residues 3649-4102 (EDVYPCTPLQ…PALSEAHLAE (454 aa)) is condensation 3. The segment at 4134 to 4530 (RRAQQSPNSQ…NLYYVRRKDS (397 aa)) is adenylation 4. Residues 4666–4740 (THTQKLLRQL…AMSSLIDEHN (75 aa)) form the Carrier 4 domain. S4701 carries the O-(pantetheine 4'-phosphoryl)serine modification. The condensation 4 stretch occupies residues 4785–5101 (TLPCTEYQQM…SAIREFIPQA (317 aa)).

It belongs to the NRP synthetase family. Requires pantetheine 4'-phosphate as cofactor.

Its pathway is mycotoxin biosynthesis; HC-toxin biosynthesis. Non-ribosomal peptide synthetase, part of the diffuse TOX2 gene cluster that mediates the biosynthesis of the HC-toxin, cyclic tetrapeptide of structure cyclo(D-Pro-L-Ala-D-Ala-L-Aeo), where Aeo stands for 2-amino-9,10-epoxi-8-oxodecanoic acid. HC-toxin is a determinant of specificity and virulence in the interaction between the producing fungus and its host, maize. HTS1, contains four modules, one for each amino acid in HC-toxin, with the order of activation being most likely Pro, Ala, Ala, and Aeo. In addition, HTS1 has one epimerase domain between modules 1 and 2, which is responsible for epimerizing L-Pro to D-Pro. The absence of an epimerizing domain after module 3, for producing D-Ala, can be explained by the presence in the cluster of TOXG, an Ala racemase, which produces D-Ala for incorporation by HTS1 into HC-toxin. The chain is HC-toxin synthetase from Cochliobolus carbonum (Maize leaf spot fungus).